A 303-amino-acid polypeptide reads, in one-letter code: Nucleotide-binding protein Dvul_1502 (303 aa).

23–30 serves as a coordination point for ATP; it reads GLSGAGKS. Residue 75–78 coordinates GTP; that stretch reads DLRE.

Belongs to the RapZ-like family.

In terms of biological role, displays ATPase and GTPase activities. This is Nucleotide-binding protein Dvul_1502 from Nitratidesulfovibrio vulgaris (strain DP4) (Desulfovibrio vulgaris).